A 308-amino-acid chain; its full sequence is Probable manganese-dependent inorganic pyrophosphatase (308 aa).

Positions 9, 13, 15, 75, 97, and 149 each coordinate Mn(2+).

Belongs to the PPase class C family. The cofactor is Mn(2+).

Its subcellular location is the cytoplasm. The catalysed reaction is diphosphate + H2O = 2 phosphate + H(+). This chain is Probable manganese-dependent inorganic pyrophosphatase, found in Listeria monocytogenes serotype 4a (strain HCC23).